The following is a 201-amino-acid chain: Ubiquitin-conjugating enzyme E2 E2 (201 aa).

Over residues 1-10 (MSTEAQRVDD) the composition is skewed to basic and acidic residues. Residues 1 to 55 (MSTEAQRVDDSPSTSGGSSDGDQRESVQQEPDREQVQPKKKEGKISSKTAAKLST) form a disordered region. Ser2 is modified (N-acetylserine). Phosphoserine is present on residues Ser11, Ser15, Ser18, and Ser19. Over residues 21-45 (GDQRESVQQEPDREQVQPKKKEGKI) the composition is skewed to basic and acidic residues. Residues 46 to 55 (SSKTAAKLST) show a composition bias toward low complexity. Residues 55 to 201 (TSAKRIQKEL…ARQWTKRYAT (147 aa)) enclose the UBC core domain. Cys139 (glycyl thioester intermediate) is an active-site residue.

It belongs to the ubiquitin-conjugating enzyme family. Autoubiquitinated.

The catalysed reaction is S-ubiquitinyl-[E1 ubiquitin-activating enzyme]-L-cysteine + [E2 ubiquitin-conjugating enzyme]-L-cysteine = [E1 ubiquitin-activating enzyme]-L-cysteine + S-ubiquitinyl-[E2 ubiquitin-conjugating enzyme]-L-cysteine.. The protein operates within protein modification; protein ubiquitination. Functionally, accepts ubiquitin from the E1 complex and catalyzes its covalent attachment to other proteins. In vitro catalyzes 'Lys-11'- and 'Lys-48'-, as well as 'Lys-63'-linked polyubiquitination. Catalyzes the ISGylation of influenza A virus NS1 protein. This Mus musculus (Mouse) protein is Ubiquitin-conjugating enzyme E2 E2 (Ube2e2).